A 386-amino-acid chain; its full sequence is Succinate--CoA ligase [ADP-forming] subunit beta (386 aa).

In terms of domain architecture, ATP-grasp spans 9-244 (KEILKQYGVK…LDEEDEKEIE (236 aa)). Residues Lys-46, 53–55 (GRG), Glu-99, Cys-102, and Glu-107 contribute to the ATP site. Mg(2+)-binding residues include Asn-199 and Asp-213. Substrate-binding positions include Asn-264 and 321–323 (GIM).

This sequence belongs to the succinate/malate CoA ligase beta subunit family. As to quaternary structure, heterotetramer of two alpha and two beta subunits. It depends on Mg(2+) as a cofactor.

The catalysed reaction is succinate + ATP + CoA = succinyl-CoA + ADP + phosphate. It catalyses the reaction GTP + succinate + CoA = succinyl-CoA + GDP + phosphate. Its pathway is carbohydrate metabolism; tricarboxylic acid cycle; succinate from succinyl-CoA (ligase route): step 1/1. Succinyl-CoA synthetase functions in the citric acid cycle (TCA), coupling the hydrolysis of succinyl-CoA to the synthesis of either ATP or GTP and thus represents the only step of substrate-level phosphorylation in the TCA. The beta subunit provides nucleotide specificity of the enzyme and binds the substrate succinate, while the binding sites for coenzyme A and phosphate are found in the alpha subunit. The protein is Succinate--CoA ligase [ADP-forming] subunit beta of Brevibacillus brevis (strain 47 / JCM 6285 / NBRC 100599).